Reading from the N-terminus, the 1034-residue chain is N-acetyl-beta-glucosaminyl-glycoprotein 4-beta-N-acetylgalactosaminyltransferase 1 (1034 aa).

The Cytoplasmic portion of the chain corresponds to M1–Q12. A helical; Signal-anchor for type II membrane protein transmembrane segment spans residues M13 to V31. Over H32–S1034 the chain is Lumenal. A disordered region spans residues D51–P104. The segment covering R72–E83 has biased composition (basic and acidic residues). N106 carries an N-linked (GlcNAc...) asparagine glycan. The PA14 domain occupies H109–H279. Disordered stretches follow at residues P450–T486 and R556–G600. The segment covering T461–S473 has biased composition (low complexity). N-linked (GlcNAc...) asparagine glycosylation occurs at N611. Disordered regions lie at residues S626 to R669 and G782 to S801. Positions E636–P661 are enriched in acidic residues.

This sequence belongs to the chondroitin N-acetylgalactosaminyltransferase family.

It localises to the golgi apparatus. It is found in the golgi stack membrane. The enzyme catalyses an N-acetyl-beta-D-glucosaminyl derivative + UDP-N-acetyl-alpha-D-galactosamine = an N-acetyl-beta-D-galactosaminyl-(1-&gt;4)-N-acetyl-beta-D-glucosaminyl derivative + UDP + H(+). Transfers N-acetylgalactosamine (GalNAc) from UDP-GalNAc to N-acetylglucosamine-beta-benzyl with a beta-1,4-linkage to form N,N'-diacetyllactosediamine, GalNAc-beta-1,4-GlcNAc structures in N-linked glycans and probably O-linked glycans. This is N-acetyl-beta-glucosaminyl-glycoprotein 4-beta-N-acetylgalactosaminyltransferase 1 (B4galnt4) from Mus musculus (Mouse).